The following is a 470-amino-acid chain: 3-isopropylmalate dehydratase large subunit (470 aa).

The segment at 50–121 (NVARGCQHRH…PCGRPGAGRH (72 aa)) is disordered. Residues cysteine 349, cysteine 409, and cysteine 412 each contribute to the [4Fe-4S] cluster site.

This sequence belongs to the aconitase/IPM isomerase family. LeuC type 1 subfamily. Heterodimer of LeuC and LeuD. [4Fe-4S] cluster serves as cofactor.

The enzyme catalyses (2R,3S)-3-isopropylmalate = (2S)-2-isopropylmalate. The protein operates within amino-acid biosynthesis; L-leucine biosynthesis; L-leucine from 3-methyl-2-oxobutanoate: step 2/4. Functionally, catalyzes the isomerization between 2-isopropylmalate and 3-isopropylmalate, via the formation of 2-isopropylmaleate. This chain is 3-isopropylmalate dehydratase large subunit, found in Azotobacter vinelandii.